The primary structure comprises 631 residues: Polyadenylate-binding protein 3 (631 aa).

4 RRM domains span residues 11-89, 99-175, 191-268, and 294-370; these read ASLY…WSQR, GNIF…QFKS, PNVY…RAQK, and VNLY…LAQR. A Phosphotyrosine modification is found at Tyr-140. Ser-315 bears the Phosphoserine mark. The residue at position 361 (Lys-361) is an N6,N6-dimethyllysine; alternate. Residue Lys-361 forms a Glycyl lysine isopeptide (Lys-Gly) (interchain with G-Cter in SUMO2); alternate linkage. Phosphotyrosine is present on Tyr-364. Residues Arg-426, Arg-430, and Arg-449 each carry the omega-N-methylarginine modification. Arg-501 is subject to Dimethylated arginine. The residue at position 513 (Arg-513) is an Omega-N-methylarginine. The PABC domain occupies 537–614; sequence QETLTASRLA…AVAVLQAHQA (78 aa).

Belongs to the polyadenylate-binding protein type-1 family. Testis specific.

The protein localises to the cytoplasm. Its function is as follows. Binds the poly(A) tail of mRNA. May be involved in cytoplasmic regulatory processes of mRNA metabolism. Binds poly(A) with a slightly lower affinity as compared to PABPC1. The polypeptide is Polyadenylate-binding protein 3 (PABPC3) (Homo sapiens (Human)).